We begin with the raw amino-acid sequence, 269 residues long: uncharacterized protein (269 aa).

A run of 8 helical transmembrane segments spans residues 9–29, 50–70, 82–102, 107–127, 147–167, 173–193, 200–220, and 224–244; these read YIIG…AHLF, FMLG…IVPL, FSII…VWAF, LYWT…MYGQ, LVFG…LHCT, VFSN…ILGF, LVSA…HLFA, and IFAF…FLLP.

It is found in the membrane. This is an uncharacterized protein from Schizosaccharomyces pombe (strain 972 / ATCC 24843) (Fission yeast).